The primary structure comprises 397 residues: Tryptophan synthase beta chain (397 aa).

K87 is subject to N6-(pyridoxal phosphate)lysine.

It belongs to the TrpB family. As to quaternary structure, tetramer of two alpha and two beta chains. Pyridoxal 5'-phosphate is required as a cofactor.

The catalysed reaction is (1S,2R)-1-C-(indol-3-yl)glycerol 3-phosphate + L-serine = D-glyceraldehyde 3-phosphate + L-tryptophan + H2O. It participates in amino-acid biosynthesis; L-tryptophan biosynthesis; L-tryptophan from chorismate: step 5/5. Functionally, the beta subunit is responsible for the synthesis of L-tryptophan from indole and L-serine. This chain is Tryptophan synthase beta chain, found in Salmonella choleraesuis (strain SC-B67).